The following is a 296-amino-acid chain: Polyamine aminopropyltransferase (296 aa).

Residues 5–238 (ELWYETLHAN…GIMTFAWATQ (234 aa)) form the PABS domain. Glutamine 33 lines the S-methyl-5'-thioadenosine pocket. The spermidine site is built by histidine 64 and aspartate 88. Residues glutamate 108 and 140–141 (DG) contribute to the S-methyl-5'-thioadenosine site. The active-site Proton acceptor is aspartate 158. Spermidine is bound at residue 158–161 (DCTD). Proline 165 is a binding site for S-methyl-5'-thioadenosine.

The protein belongs to the spermidine/spermine synthase family. As to quaternary structure, homodimer or homotetramer.

It is found in the cytoplasm. It carries out the reaction S-adenosyl 3-(methylsulfanyl)propylamine + putrescine = S-methyl-5'-thioadenosine + spermidine + H(+). It participates in amine and polyamine biosynthesis; spermidine biosynthesis; spermidine from putrescine: step 1/1. Functionally, catalyzes the irreversible transfer of a propylamine group from the amino donor S-adenosylmethioninamine (decarboxy-AdoMet) to putrescine (1,4-diaminobutane) to yield spermidine. This Yersinia pseudotuberculosis serotype O:3 (strain YPIII) protein is Polyamine aminopropyltransferase.